Consider the following 287-residue polypeptide: ATP synthase gamma chain (287 aa).

Belongs to the ATPase gamma chain family. F-type ATPases have 2 components, CF(1) - the catalytic core - and CF(0) - the membrane proton channel. CF(1) has five subunits: alpha(3), beta(3), gamma(1), delta(1), epsilon(1). CF(0) has three main subunits: a, b and c.

The protein localises to the cell inner membrane. Produces ATP from ADP in the presence of a proton gradient across the membrane. The gamma chain is believed to be important in regulating ATPase activity and the flow of protons through the CF(0) complex. The polypeptide is ATP synthase gamma chain (Xanthomonas campestris pv. campestris (strain B100)).